The sequence spans 308 residues: UDP-N-acetylenolpyruvoylglucosamine reductase 2 (308 aa).

The FAD-binding PCMH-type domain occupies R31–A197. R176 is an active-site residue. S226 acts as the Proton donor in catalysis. Residue E296 is part of the active site.

It belongs to the MurB family. The cofactor is FAD.

It localises to the cytoplasm. It catalyses the reaction UDP-N-acetyl-alpha-D-muramate + NADP(+) = UDP-N-acetyl-3-O-(1-carboxyvinyl)-alpha-D-glucosamine + NADPH + H(+). Its pathway is cell wall biogenesis; peptidoglycan biosynthesis. Functionally, cell wall formation. This is UDP-N-acetylenolpyruvoylglucosamine reductase 2 from Symbiobacterium thermophilum (strain DSM 24528 / JCM 14929 / IAM 14863 / T).